The sequence spans 76 residues: Defensin-like protein 122 (76 aa).

An N-terminal signal peptide occupies residues 1–25 (MSKTTVIAIFMVVLVLGLVTKETQG). Intrachain disulfides connect Cys-29–Cys-74, Cys-39–Cys-60, Cys-44–Cys-68, and Cys-48–Cys-70.

The protein belongs to the DEFL family. In terms of tissue distribution, expressed in flower buds, but not in stems, roots or rosette leaves.

The protein resides in the secreted. This Arabidopsis thaliana (Mouse-ear cress) protein is Defensin-like protein 122 (LCR30).